The sequence spans 351 residues: sn-glycerol-3-phosphate import ATP-binding protein UgpC (351 aa).

The 231-residue stretch at 4–234 (ITLDNLVKAY…PATTFVAGFI (231 aa)) folds into the ABC transporter domain. 36-43 (GPSGCGKS) is a binding site for ATP.

It belongs to the ABC transporter superfamily. sn-glycerol-3-phosphate importer (TC 3.A.1.1.3) family. As to quaternary structure, the complex is composed of two ATP-binding proteins (UgpC), two transmembrane proteins (UgpA and UgpE) and a solute-binding protein (UgpB).

It is found in the cell inner membrane. The catalysed reaction is sn-glycerol 3-phosphate(out) + ATP + H2O = sn-glycerol 3-phosphate(in) + ADP + phosphate + H(+). Part of the ABC transporter complex UgpBAEC involved in sn-glycerol-3-phosphate (G3P) import. Responsible for energy coupling to the transport system. The protein is sn-glycerol-3-phosphate import ATP-binding protein UgpC of Ruegeria pomeroyi (strain ATCC 700808 / DSM 15171 / DSS-3) (Silicibacter pomeroyi).